A 354-amino-acid polypeptide reads, in one-letter code: Uroporphyrinogen decarboxylase (354 aa).

Residues 27–31 (RQAGR), D77, Y154, T209, and H327 each bind substrate.

Belongs to the uroporphyrinogen decarboxylase family. Homodimer.

The protein resides in the cytoplasm. The catalysed reaction is uroporphyrinogen III + 4 H(+) = coproporphyrinogen III + 4 CO2. It functions in the pathway porphyrin-containing compound metabolism; protoporphyrin-IX biosynthesis; coproporphyrinogen-III from 5-aminolevulinate: step 4/4. Its function is as follows. Catalyzes the decarboxylation of four acetate groups of uroporphyrinogen-III to yield coproporphyrinogen-III. The polypeptide is Uroporphyrinogen decarboxylase (Escherichia coli O6:K15:H31 (strain 536 / UPEC)).